The chain runs to 167 residues: MALLNILQYPDERLHTVAKPVEQVDERIRKLIADMFETMYESRGIGLAATQVDVHERVVVMDLTEDRSEPRVFINPVIVEKDGETTYEEGCLSVPGIYDTVTRAERVKVEALNEKGEKFTLEADGLLAICVQHELDHLMGIVFVERLSQLKQGRIKTKLKKRQKHTI.

Residues C91 and H133 each coordinate Fe cation. Residue E134 is part of the active site. Residue H137 coordinates Fe cation.

It belongs to the polypeptide deformylase family. It depends on Fe(2+) as a cofactor.

The enzyme catalyses N-terminal N-formyl-L-methionyl-[peptide] + H2O = N-terminal L-methionyl-[peptide] + formate. Removes the formyl group from the N-terminal Met of newly synthesized proteins. Requires at least a dipeptide for an efficient rate of reaction. N-terminal L-methionine is a prerequisite for activity but the enzyme has broad specificity at other positions. The sequence is that of Peptide deformylase from Neisseria meningitidis serogroup C (strain 053442).